We begin with the raw amino-acid sequence, 289 residues long: Minor capsid protein P10 (289 aa).

The interval 1-21 (MMNFILVLLIVAMIGTILVSE) is hydrophobic.

In terms of assembly, interacts with the major capsid protein.

It is found in the virion. One of the minor capsid proteins that constitute a network internal to the major capsid proteins and outside the lipid membrane. The minor capsid proteins glue and stabilize the capsomers. The polypeptide is Minor capsid protein P10 (Chlorella (PBCV-1)).